Here is a 410-residue protein sequence, read N- to C-terminus: uncharacterized protein (410 aa).

The next 12 membrane-spanning stretches (helical) occupy residues 27 to 47 (ILAL…VQSI), 63 to 83 (SLAL…TGPL), 97 to 117 (LFIA…ISIV), 118 to 138 (LLRA…MTYI), 145 to 165 (NSLS…GFLG), 180 to 200 (ISLM…LYFL), 228 to 248 (VLFF…TIFN), 254 to 274 (LMLE…TIYL), 293 to 313 (NNIL…TQYN), 316 to 332 (FIII…FFAS), 355 to 375 (YLFF…FFWF), and 378 to 398 (QWLG…FLSF).

It belongs to the major facilitator superfamily.

It localises to the cell membrane. This is an uncharacterized protein from Buchnera aphidicola subsp. Acyrthosiphon pisum (strain APS) (Acyrthosiphon pisum symbiotic bacterium).